We begin with the raw amino-acid sequence, 349 residues long: tRNA pseudouridine synthase D (349 aa).

Phenylalanine 26 provides a ligand contact to substrate. The active-site Nucleophile is aspartate 79. Asparagine 128 is a substrate binding site. Residues 154-303 enclose the TRUD domain; the sequence is GVPNYFGSQR…VDAARRAMLV (150 aa). Phenylalanine 329 lines the substrate pocket.

This sequence belongs to the pseudouridine synthase TruD family.

It catalyses the reaction uridine(13) in tRNA = pseudouridine(13) in tRNA. In terms of biological role, responsible for synthesis of pseudouridine from uracil-13 in transfer RNAs. This chain is tRNA pseudouridine synthase D, found in Erwinia tasmaniensis (strain DSM 17950 / CFBP 7177 / CIP 109463 / NCPPB 4357 / Et1/99).